The primary structure comprises 479 residues: Probable periplasmic serine endoprotease DegP-like (479 aa).

The N-terminal stretch at 1-27 (MSMPSLKKYAAALFAVFLMGQSVAAHA) is a signal peptide. Active-site charge relay system residues include His118, Asp148, and Ser221. Substrate contacts are provided by residues 219–221 (GNS) and 276–280 (LGVVI). PDZ domains follow at residues 265–356 (LKAS…VREG) and 362–468 (KVAV…LRQG). The interval 368 to 390 (MPADDGDEATNDAAPSAERSSNR) is disordered.

It belongs to the peptidase S1C family.

It is found in the periplasm. It catalyses the reaction Acts on substrates that are at least partially unfolded. The cleavage site P1 residue is normally between a pair of hydrophobic residues, such as Val-|-Val.. Its function is as follows. Might be efficient in the degradation of transiently denatured and unfolded proteins which accumulate in the periplasm following stress conditions. The sequence is that of Probable periplasmic serine endoprotease DegP-like from Pseudomonas fulva (strain 12-X).